Consider the following 323-residue polypeptide: Prenyl transferase (323 aa).

Isopentenyl diphosphate is bound by residues lysine 46, arginine 49, and histidine 81. The Mg(2+) site is built by aspartate 88 and aspartate 92. Residue arginine 97 participates in an all-trans-polyprenyl diphosphate binding. An isopentenyl diphosphate-binding site is contributed by arginine 98. An all-trans-polyprenyl diphosphate is bound by residues lysine 174, threonine 175, and glutamine 212.

It belongs to the FPP/GGPP synthase family. Mg(2+) is required as a cofactor.

The protein localises to the plastid. Its subcellular location is the chloroplast. Its function is as follows. Possible role in synthesis of the nonaprenyl side chain of plastoquinone or in synthesis of other prenyl chains such as undekaprenyl pyrophosphate. This chain is Prenyl transferase (preA), found in Porphyra purpurea (Red seaweed).